Here is a 487-residue protein sequence, read N- to C-terminus: 1-hydroxycarotenoid 3,4-desaturase (487 aa).

FAD contacts are provided by residues Gly-12, Glu-31, Lys-39, 55–56 (SL), Val-247, Asn-275, Leu-431, Gly-461, and 468–469 (GI).

It belongs to the carotenoid/retinoid oxidoreductase family. In terms of assembly, monomer.

The catalysed reaction is rhodopin + A = (3E)-3,4-didehydrorhodopin + AH2. It catalyses the reaction 1'-hydroxy-gamma-carotene + A = 1'-hydroxytorulene + AH2. The enzyme catalyses 1-hydroxy-all-trans-1,2-dihydro-neurosporene + A = demethylspheroidene + AH2. It carries out the reaction 1,1'-dihydroxy-1,1',2,2'-tetrahydroneurosporene + A = 1'-hydroxy-demethylspheroidene + AH2. The catalysed reaction is 1,1'-dihydroxy-1,1',2,2'-tetrahydrolycopene + A = 1,1'-dihydroxy-3,4-didehydro-1,2-dihydrolycopene + AH2. Its pathway is carotenoid biosynthesis. Catalyzes the introduction of a C-3,4 double bond into 1'-hydroxy-gamma-carotene and rhodopin (1-hydroxylycopene) to yield 1'-hydroxytorulene and (3E)-3,4-didehydrorhodopin, respectively. Can also use 1-hydroxy-all-trans-1,2-dihydro-neurosporene, 1,1'-dihydroxy-1,1',2,2'-tetrahydroneurosporene and 1,1'-dihydroxy-1,1',2,2'-tetrahydrolycopene. Probably involved in the synthesis of myxol, a gamma-carotene derivative. May use FAD as a proton acceptor. This is 1-hydroxycarotenoid 3,4-desaturase from Nonlabens dokdonensis (strain DSM 17205 / KCTC 12402 / DSW-6) (Donghaeana dokdonensis).